A 318-amino-acid chain; its full sequence is Ribose-phosphate pyrophosphokinase 2 (318 aa).

ATP is bound at residue 96 to 101 (RQDKKD). Residues Asp-128, His-130, Asp-139, and Asp-143 each coordinate Mg(2+). Position 130 (His-130) interacts with ATP. Residues 212 to 227 (KDRVAILVDDMADTCG) form a binding of phosphoribosylpyrophosphate region.

The protein belongs to the ribose-phosphate pyrophosphokinase family. In terms of assembly, homodimer. The active form is probably a hexamer composed of 3 homodimers. The cofactor is Mg(2+).

The enzyme catalyses D-ribose 5-phosphate + ATP = 5-phospho-alpha-D-ribose 1-diphosphate + AMP + H(+). The protein operates within metabolic intermediate biosynthesis; 5-phospho-alpha-D-ribose 1-diphosphate biosynthesis; 5-phospho-alpha-D-ribose 1-diphosphate from D-ribose 5-phosphate (route I): step 1/1. With respect to regulation, activated by magnesium and inorganic phosphate. Competitively or non-competitively inhibited by ADP, 2,3-bisphosphoglyceride or GDP. Functionally, catalyzes the synthesis of phosphoribosylpyrophosphate (PRPP) that is essential for nucleotide synthesis. The protein is Ribose-phosphate pyrophosphokinase 2 (Prps2) of Mus musculus (Mouse).